Here is a 752-residue protein sequence, read N- to C-terminus: MAP/microtubule affinity-regulating kinase 4 (752 aa).

Positions 1-36 are disordered; the sequence is MSSRTVLAPGNDRNSDTHGTLGSGRSSDKGPSWSSR. Positions 59–310 constitute a Protein kinase domain; it reads YRLLRTIGKG…LEQIMKDKWI (252 aa). ATP contacts are provided by residues 65–73 and Lys-88; that span reads IGKGNFAKV. The Proton acceptor role is filled by Asp-181. A Phosphothreonine; by LKB1 modification is found at Thr-214. The UBA domain occupies 324–368; the sequence is EPEEDFGDTKRIEVMVGMGYTREEIKESLTSQKYNEVTATYLLLG. The disordered stretch occupies residues 385-614; that stretch reads ARVRAPSDTT…PAGRPRPTTN (230 aa). Residues 391-406 show a composition bias toward low complexity; sequence SDTTNGTSSSKGTSHS. A phosphoserine mark is found at Ser-423 and Ser-543. Residues 544-553 show a composition bias toward low complexity; sequence PSSHSLAPPS. Positions 703–752 constitute a KA1 domain; the sequence is AGGPEPLSHFEVEVCQLPRPGLRGVLFRRVAGTALAFRTLVTRISNDLEL.

It belongs to the protein kinase superfamily. CAMK Ser/Thr protein kinase family. SNF1 subfamily. In terms of assembly, interacts with MAPT/TAU. Interacts with gamma-tubulin. Interacts with ODF2. Interacts with USP9X. Interacts with YWHAQ. Interacts with NLRP3; promoting NLRP3 recruitment to microtubule organizing center (MTOC). Requires Mg(2+) as cofactor. Ubiquitinated with 'Lys-29'- and 'Lys-33'-linked polyubiquitins which appear to impede LKB1-mediated phosphorylation. Deubiquitinated by USP9X. In terms of processing, phosphorylated at Thr-214 by STK11/LKB1 in complex with STE20-related adapter-alpha (STRADA) pseudo kinase and CAB39. Phosphorylated throughout the cell cycle. As to expression, ubiquitous. Isoform 2 is brain-specific. Expressed at highest levels in brain and testis. Also expressed in heart, lung, liver, muscle, kidney and spleen.

The protein resides in the cytoplasm. It is found in the cytoskeleton. Its subcellular location is the microtubule organizing center. The protein localises to the centrosome. It localises to the cilium basal body. The protein resides in the cilium axoneme. It is found in the cell projection. Its subcellular location is the dendrite. It catalyses the reaction L-seryl-[protein] + ATP = O-phospho-L-seryl-[protein] + ADP + H(+). The enzyme catalyses L-threonyl-[protein] + ATP = O-phospho-L-threonyl-[protein] + ADP + H(+). Its activity is regulated as follows. Activated by phosphorylation on Thr-214. Serine/threonine-protein kinase. Phosphorylates the microtubule-associated protein MAPT/TAU. Also phosphorylates the microtubule-associated proteins MAP2 and MAP4. Involved in regulation of the microtubule network, causing reorganization of microtubules into bundles. Required for the initiation of axoneme extension during cilium assembly. Regulates the centrosomal location of ODF2 and phosphorylates ODF2 in vitro. Plays a role in cell cycle progression, specifically in the G1/S checkpoint. Reduces neuronal cell survival. Plays a role in energy homeostasis by regulating satiety and metabolic rate. Promotes adipogenesis by activating JNK1 and inhibiting the p38MAPK pathway, and triggers apoptosis by activating the JNK1 pathway. Phosphorylates mTORC1 complex member RPTOR and acts as a negative regulator of the mTORC1 complex, probably due to disruption of the interaction between phosphorylated RPTOR and the RRAGA/RRAGC heterodimer which is required for mTORC1 activation. Involved in NLRP3 positioning along microtubules by mediating NLRP3 recruitment to microtubule organizing center (MTOC) upon inflammasome activation. The polypeptide is MAP/microtubule affinity-regulating kinase 4 (Homo sapiens (Human)).